Here is a 1955-residue protein sequence, read N- to C-terminus: Protocadherin-15 (1955 aa).

The first 26 residues, 1–26 (MFRQFYLWTCLASGIILGSLFEICLG), serve as a signal peptide directing secretion. Residues 27–1376 (QYDDDCKLAR…GESLGYTEGA (1350 aa)) are Extracellular-facing. Cysteine 32 and cysteine 120 are oxidised to a cystine. Cadherin domains follow at residues 40-147 (PATI…SPTF), 148-265 (KHES…GPMF), 278-395 (RPLT…SPYF), 396-509 (TMPS…TPTF), 510-616 (PEIS…PPRF), 617-717 (PQLM…APVF), 719-819 (PYLP…SPVF), 820-926 (TNST…PPVF), 927-1035 (SKRI…IPRF), 1037-1144 (QEEY…PPVF), and 1145-1259 (QKKF…PPTL). N-linked (GlcNAc...) asparagine glycans are attached at residues asparagine 52, asparagine 97, and asparagine 201. 7 N-linked (GlcNAc...) asparagine glycosylation sites follow: asparagine 419, asparagine 559, asparagine 662, asparagine 724, asparagine 768, asparagine 821, and asparagine 851. Residues asparagine 1064, asparagine 1084, and asparagine 1175 are each glycosylated (N-linked (GlcNAc...) asparagine). The chain crosses the membrane as a helical span at residues 1377–1397 (LLALAFIIILCCIPAILVVLV). Topologically, residues 1398-1955 (SYRQFKVRQA…KQSHSQSTSL (558 aa)) are cytoplasmic. Residues 1426 to 1444 (VPAPAPVAAPPPPPPPPPG) are compositionally biased toward pro residues. 4 disordered regions span residues 1426 to 1446 (VPAPAPVAAPPPPPPPPPGAH), 1601 to 1623 (QGTRQKAENENTGICTNKRGSSN), 1745 to 1766 (CPLPPPPPISPPSPPPAPAPLA), and 1928 to 1955 (ITSEQNKGSLNNIVEGTEKQSHSQSTSL). Positions 1928–1941 (ITSEQNKGSLNNIV) are enriched in polar residues.

In terms of assembly, antiparallel heterodimer with CDH23. Found in a complex with TMIE and LHFPL5. Interacts with LHFPL5/TMHS; this interaction is required for efficient localization to hair bundles. Interacts with MYO7A. Interacts with USH1G; this interaction may recruit USH1G to the plasma membrane. Interacts with TOMT. Isoforms CD1 and CD3 interact with TMC1 (via N-terminus) and TMC2 (via N-terminus). Expressed in brain, lung, kidney, spleen and testis. Found also in the inner and outer synaptic layers, and the nerve fiber layer in adult and fetal retinas. Found in the supporting cells, outer sulcus cells and spiral ganglion of fetal cochlea. Expressed in cytotoxic tumor-derived T- and NK-cell lines as well as biopsies of nasal NK/T-cell lymphomas. Not detected in normal or in vitro activated peripheral blood cells, CD4 or CD8 lymphocytes or NK cells. Isoform 3 is expressed in brain, heart, cerebellum and kidney. CD1 isoforms, such as isoform 1, have a limited pattern of expression and is detected in testis, retina and cochlea. CD2 isoforms, such as isoforms 4 and 5, are expressed in heart, kidney, thymus, spleen, testis, retina and cochlea. CD3 isoforms, such as isoform 6, are widely expressed.

It localises to the cell membrane. Its subcellular location is the secreted. Its function is as follows. Calcium-dependent cell-adhesion protein. Essential for maintenance of normal retinal and cochlear function. The polypeptide is Protocadherin-15 (PCDH15) (Homo sapiens (Human)).